The chain runs to 421 residues: MAAMFRRSCRVLRSLSHFGWRSQHTKAVPQCEPGSGFSFELTEQQKEFQATARKFAREEIIPVAAEYDRTGEYPVPLLKRAWELGLMNTHIPESFGGLGLGIIDSCLITEELAYGCTGVQTAIEANTLGQVPLIIGGNYQQQKKYLGRMTEEPLMCAYCVTEPGAGSDVAGIKTKAEKKGDEYIINGQKMWITNGGKANWYFLLARSDPDPKAPASKAFTGFIVEADTPGVQIGRKEINMGQRCSDTRGIVFEDVRVPKENVLTGEGAGFKIAMGTFDKTRPPVAAGAVGLAQRALDEATKYALERKTFGKLLAEHQGISFLLADMAMKVELARLSYQRAAWEIDSGRRNTYYASIAKAYAADIANQLATDAVQVFGGNGFNTEYPVEKLMRDAKIYQIYEGTAQIQRIIIAREHIGRYKN.

The N-terminal 25 residues, 1 to 25, are a transit peptide targeting the mitochondrion; that stretch reads MAAMFRRSCRVLRSLSHFGWRSQHT. Lys79 is modified (N6-acetyllysine). 158–167 contacts FAD; sequence YCVTEPGAGS. Ser167 is a binding site for octanoyl-CoA. Lys179 is modified (N6-succinyllysine). Residue 191-193 coordinates FAD; that stretch reads WIT. Residue Lys212 is modified to N6-acetyllysine; alternate. Position 212 is an N6-succinyllysine; alternate (Lys212). Ser216 serves as a coordination point for octanoyl-CoA. Lys217, Lys259, and Lys271 each carry N6-acetyllysine; alternate. N6-succinyllysine; alternate occurs at positions 217, 259, and 271. Asp278 contacts octanoyl-CoA. Lys279 carries the N6-acetyllysine modification. Residue Arg281 participates in octanoyl-CoA binding. Lys301 bears the N6-acetyllysine mark. FAD contacts are provided by residues 306 to 308 and 316 to 317; these read RKT and HQ. 2 residues coordinate octanoyl-CoA: Arg349 and Thr351. Thr351 is modified (phosphothreonine). 374–378 provides a ligand contact to FAD; the sequence is QVFGG. Glu401 provides a ligand contact to octanoyl-CoA. The active-site Proton acceptor is Glu401. 402–405 provides a ligand contact to FAD; sequence GTAQ.

Belongs to the acyl-CoA dehydrogenase family. Homotetramer. Interacts with the heterodimeric electron transfer flavoprotein ETF. FAD serves as cofactor. In terms of processing, acetylated. Could occur at proximity of the cofactor-binding sites and reduce the catalytic activity. Could be deacetylated by SIRT3.

It localises to the mitochondrion matrix. The catalysed reaction is a medium-chain 2,3-saturated fatty acyl-CoA + oxidized [electron-transfer flavoprotein] + H(+) = a medium-chain (2E)-enoyl-CoA + reduced [electron-transfer flavoprotein]. It catalyses the reaction pentanoyl-CoA + oxidized [electron-transfer flavoprotein] + H(+) = (2E)-pentenoyl-CoA + reduced [electron-transfer flavoprotein]. It carries out the reaction hexanoyl-CoA + oxidized [electron-transfer flavoprotein] + H(+) = (2E)-hexenoyl-CoA + reduced [electron-transfer flavoprotein]. The enzyme catalyses octanoyl-CoA + oxidized [electron-transfer flavoprotein] + H(+) = (2E)-octenoyl-CoA + reduced [electron-transfer flavoprotein]. The catalysed reaction is decanoyl-CoA + oxidized [electron-transfer flavoprotein] + H(+) = (2E)-decenoyl-CoA + reduced [electron-transfer flavoprotein]. It catalyses the reaction dodecanoyl-CoA + oxidized [electron-transfer flavoprotein] + H(+) = (2E)-dodecenoyl-CoA + reduced [electron-transfer flavoprotein]. It carries out the reaction tetradecanoyl-CoA + oxidized [electron-transfer flavoprotein] + H(+) = (2E)-tetradecenoyl-CoA + reduced [electron-transfer flavoprotein]. The enzyme catalyses oxidized [electron-transfer flavoprotein] + hexadecanoyl-CoA + H(+) = (2E)-hexadecenoyl-CoA + reduced [electron-transfer flavoprotein]. Its pathway is lipid metabolism; mitochondrial fatty acid beta-oxidation. In terms of biological role, medium-chain specific acyl-CoA dehydrogenase is one of the acyl-CoA dehydrogenases that catalyze the first step of mitochondrial fatty acid beta-oxidation, an aerobic process breaking down fatty acids into acetyl-CoA and allowing the production of energy from fats. The first step of fatty acid beta-oxidation consists in the removal of one hydrogen from C-2 and C-3 of the straight-chain fatty acyl-CoA thioester, resulting in the formation of trans-2-enoyl-CoA. Electron transfer flavoprotein (ETF) is the electron acceptor that transfers electrons to the main mitochondrial respiratory chain via ETF-ubiquinone oxidoreductase (ETF dehydrogenase). Among the different mitochondrial acyl-CoA dehydrogenases, medium-chain specific acyl-CoA dehydrogenase acts specifically on acyl-CoAs with saturated 6 to 12 carbons long primary chains. This chain is Medium-chain specific acyl-CoA dehydrogenase, mitochondrial, found in Sus scrofa (Pig).